The sequence spans 252 residues: Hydroxyacylglutathione hydrolase (252 aa).

Residues histidine 54, histidine 56, aspartate 58, histidine 59, histidine 113, aspartate 132, and histidine 170 each contribute to the Zn(2+) site.

It belongs to the metallo-beta-lactamase superfamily. Glyoxalase II family. Monomer. Requires Zn(2+) as cofactor.

It catalyses the reaction an S-(2-hydroxyacyl)glutathione + H2O = a 2-hydroxy carboxylate + glutathione + H(+). Its pathway is secondary metabolite metabolism; methylglyoxal degradation; (R)-lactate from methylglyoxal: step 2/2. In terms of biological role, thiolesterase that catalyzes the hydrolysis of S-D-lactoyl-glutathione to form glutathione and D-lactic acid. The chain is Hydroxyacylglutathione hydrolase from Thermosynechococcus vestitus (strain NIES-2133 / IAM M-273 / BP-1).